The primary structure comprises 457 residues: Cysteine--tRNA ligase (457 aa).

Cys-30 contacts Zn(2+). Positions 32 to 42 (PTVYDRAHLGN) match the 'HIGH' region motif. Zn(2+) is bound by residues Cys-213, His-238, and Glu-242. The short motif at 271 to 275 (KMSKS) is the 'KMSKS' region element. Lys-274 is a binding site for ATP.

This sequence belongs to the class-I aminoacyl-tRNA synthetase family. As to quaternary structure, monomer. The cofactor is Zn(2+).

The protein resides in the cytoplasm. It catalyses the reaction tRNA(Cys) + L-cysteine + ATP = L-cysteinyl-tRNA(Cys) + AMP + diphosphate. This is Cysteine--tRNA ligase from Ruegeria sp. (strain TM1040) (Silicibacter sp.).